The primary structure comprises 89 residues: Signal recognition particle 19 kDa protein (89 aa).

This sequence belongs to the SRP19 family. In terms of assembly, part of the signal recognition particle protein translocation system, which is composed of SRP and FtsY. Archaeal SRP consists of a 7S RNA molecule of 300 nucleotides and two protein subunits: SRP54 and SRP19.

It localises to the cytoplasm. Involved in targeting and insertion of nascent membrane proteins into the cytoplasmic membrane. Binds directly to 7S RNA and mediates binding of the 54 kDa subunit of the SRP. The chain is Signal recognition particle 19 kDa protein from Methanococcus maripaludis (strain C7 / ATCC BAA-1331).